Consider the following 398-residue polypeptide: Interleukin-1 receptor type 2 (398 aa).

The N-terminal stretch at 1 to 13 (MLRLYVLVMGVSA) is a signal peptide. Over 14–343 (FTLQPAAHTG…FQTLRTTVKE (330 aa)) the chain is Extracellular. Ig-like C2-type domains are found at residues 18–124 (PAAH…IELR), 134–223 (PFIS…ITRS), and 237–349 (PVII…STFS). Disulfide bonds link Cys-28/Cys-116, Cys-50/Cys-108, and Cys-152/Cys-207. N-linked (GlcNAc...) asparagine glycosylation is found at Asn-66, Asn-72, and Asn-112. N-linked (GlcNAc...) asparagine glycosylation is found at Asn-219 and Asn-277. The cysteines at positions 258 and 326 are disulfide-linked. The segment at 329 to 343 (HNTLSFQTLRTTVKE) is contains proteolytic cleavage site. A helical transmembrane segment spans residues 344–369 (ASSTFSWGIVLAPLSLAFLVLGGIWM). The Cytoplasmic portion of the chain corresponds to 370–398 (HRRCKHRTGKADGLTVLWPHHQDFQSYPK).

This sequence belongs to the interleukin-1 receptor family. In terms of assembly, associates with IL1RAP to form a non-signaling interleukin-1 receptor complex. Post-translationally, a soluble form (sIL1R2) can also be produced by proteolytic cleavage at the cell surface (shedding) involving a metalloproteinase; hovever, several sIL1R2 forms ranging from 45 and 60 kDa are reported.

It is found in the secreted. It localises to the cell membrane. Non-signaling receptor for IL1A, IL1B and IL1RN. Reduces IL1B activities. Serves as a decoy receptor by competitive binding to IL1B and preventing its binding to IL1R1. Also modulates cellular response through non-signaling association with IL1RAP after binding to IL1B. IL1R2 (membrane and secreted forms) preferentially binds IL1B and poorly IL1A and IL1RN. The secreted IL1R2 recruits secreted IL1RAP with high affinity; this complex formation may be the dominant mechanism for neutralization of IL1B by secreted/soluble receptors. This chain is Interleukin-1 receptor type 2 (IL1R2), found in Homo sapiens (Human).